A 215-amino-acid polypeptide reads, in one-letter code: Adenylate kinase (215 aa).

10 to 15 (GAGKGT) is an ATP binding site. Residues 30–59 (STGDMFRLAIKEGTELGKKAKEFMDQGDLV) are NMP. AMP contacts are provided by residues threonine 31, arginine 36, 57–59 (DLV), 85–88 (GFPR), and glutamine 92. An LID region spans residues 126–163 (GRRICPTCGTAYHVVYNPPKEEGICDKDGSQLIQRDDD). Arginine 127 is an ATP binding site. Positions 130, 133, 150, and 153 each coordinate Zn(2+). Arginine 160 and arginine 171 together coordinate AMP. Residue arginine 199 coordinates ATP.

It belongs to the adenylate kinase family. As to quaternary structure, monomer.

Its subcellular location is the cytoplasm. The enzyme catalyses AMP + ATP = 2 ADP. It functions in the pathway purine metabolism; AMP biosynthesis via salvage pathway; AMP from ADP: step 1/1. Catalyzes the reversible transfer of the terminal phosphate group between ATP and AMP. Plays an important role in cellular energy homeostasis and in adenine nucleotide metabolism. This is Adenylate kinase from Oceanobacillus iheyensis (strain DSM 14371 / CIP 107618 / JCM 11309 / KCTC 3954 / HTE831).